Here is a 440-residue protein sequence, read N- to C-terminus: Asparagine--tRNA ligase (440 aa).

It belongs to the class-II aminoacyl-tRNA synthetase family. As to quaternary structure, homodimer.

It localises to the cytoplasm. The catalysed reaction is tRNA(Asn) + L-asparagine + ATP = L-asparaginyl-tRNA(Asn) + AMP + diphosphate + H(+). The chain is Asparagine--tRNA ligase from Roseiflexus castenholzii (strain DSM 13941 / HLO8).